Consider the following 424-residue polypeptide: Histidine--tRNA ligase (424 aa).

Belongs to the class-II aminoacyl-tRNA synthetase family. Homodimer.

The protein resides in the cytoplasm. It catalyses the reaction tRNA(His) + L-histidine + ATP = L-histidyl-tRNA(His) + AMP + diphosphate + H(+). This Shigella sonnei (strain Ss046) protein is Histidine--tRNA ligase.